We begin with the raw amino-acid sequence, 432 residues long: Trigger factor (432 aa).

In terms of domain architecture, PPIase FKBP-type spans 161-246 (DDRVTIDFVG…LKKIENMVLP (86 aa)).

It belongs to the FKBP-type PPIase family. Tig subfamily.

The protein localises to the cytoplasm. The catalysed reaction is [protein]-peptidylproline (omega=180) = [protein]-peptidylproline (omega=0). In terms of biological role, involved in protein export. Acts as a chaperone by maintaining the newly synthesized protein in an open conformation. Functions as a peptidyl-prolyl cis-trans isomerase. The sequence is that of Trigger factor from Haemophilus influenzae (strain 86-028NP).